The primary structure comprises 163 residues: ATP synthase subunit b', chloroplastic (163 aa).

Residues 26–46 (ATLPLMAVQILLFMVILNAVF) traverse the membrane as a helical segment.

It belongs to the ATPase B chain family. As to quaternary structure, F-type ATPases have 2 components, F(1) - the catalytic core - and F(0) - the membrane proton channel. F(1) has five subunits: alpha(3), beta(3), gamma(1), delta(1), epsilon(1). F(0) has four main subunits: a(1), b(1), b'(1) and c(10-14). The alpha and beta chains form an alternating ring which encloses part of the gamma chain. F(1) is attached to F(0) by a central stalk formed by the gamma and epsilon chains, while a peripheral stalk is formed by the delta, b and b' chains.

Its subcellular location is the plastid. The protein localises to the chloroplast thylakoid membrane. Its function is as follows. F(1)F(0) ATP synthase produces ATP from ADP in the presence of a proton or sodium gradient. F-type ATPases consist of two structural domains, F(1) containing the extramembraneous catalytic core and F(0) containing the membrane proton channel, linked together by a central stalk and a peripheral stalk. During catalysis, ATP synthesis in the catalytic domain of F(1) is coupled via a rotary mechanism of the central stalk subunits to proton translocation. Component of the F(0) channel, it forms part of the peripheral stalk, linking F(1) to F(0). The b'-subunit is a diverged and duplicated form of b found in plants and photosynthetic bacteria. This chain is ATP synthase subunit b', chloroplastic, found in Guillardia theta (Cryptophyte).